Reading from the N-terminus, the 636-residue chain is Basic helix-loop-helix ARNT-like protein 2 (636 aa).

Residues 25-62 (VSSRVSPGTRPTAMGSFSSHMTEFPRKRKGSDSDPSQS) are disordered. Positions 46 to 258 (TEFPRKRKGS…SPREKLIDAK (213 aa)) are interaction with PER2. The Nuclear localization signal motif lies at 49 to 54 (PRKRKG). The bHLH domain maps to 107 to 160 (AFREAHSQTEKRRRDKMNNLIEELSAMIPQCNPMARKLDKLTVLRMAVQHLRSL). A Nuclear export signal 1 motif is present at residues 177–187 (LQDNELRHLIL). The PAS 1 domain maps to 178–250 (QDNELRHLIL…EQLSSFDISP (73 aa)). K287 participates in a covalent cross-link: Glycyl lysine isopeptide (Lys-Gly) (interchain with G-Cter in SUMO2 and SUMO3). Residue K294 forms a Glycyl lysine isopeptide (Lys-Gly) (interchain with G-Cter in SUMO2) linkage. Positions 357 to 427 (VPQNSGEINV…DKHKAVLQSK (71 aa)) constitute a PAS 2 domain. The Nuclear export signal 2 motif lies at 392–400 (LGYLPQELL). Positions 432 to 475 (TDSYKFRAKDGSFVTLKSQWFSFTNPWTKELEYIVSVNTLVLGH) constitute a PAC domain.

Component of the circadian core oscillator, which includes the CRY proteins, CLOCK, or NPAS2, BMAL1 or BMAL2, CSNK1D and/or CSNK1E, TIMELESS and the PER proteins. Interacts directly with CLOCK to form the BMAL2-CLOCK transactivator. Can form heterodimers or homodimers which interact directly with CLOCK to form the transcription activator. Interacts with NPAS2 and HIF1A. Interacts with PER2. Expressed in fetal brain. Highly expressed in brain and placenta. Lower levels in heart, liver, thymus, kidney and lung. Located to endothelial cells and neuronal cells of the suprachiasmatic nucleus (SCN). Also detected in endothelial cells of the heart, lung and kidney. In the brain, specifically expressed in the thalamus, hippocampus and amygdala.

Its subcellular location is the nucleus. Functionally, transcriptional activator which forms a core component of the circadian clock. The circadian clock, an internal time-keeping system, regulates various physiological processes through the generation of approximately 24 hour circadian rhythms in gene expression, which are translated into rhythms in metabolism and behavior. It is derived from the Latin roots 'circa' (about) and 'diem' (day) and acts as an important regulator of a wide array of physiological functions including metabolism, sleep, body temperature, blood pressure, endocrine, immune, cardiovascular, and renal function. Consists of two major components: the central clock, residing in the suprachiasmatic nucleus (SCN) of the brain, and the peripheral clocks that are present in nearly every tissue and organ system. Both the central and peripheral clocks can be reset by environmental cues, also known as Zeitgebers (German for 'timegivers'). The predominant Zeitgeber for the central clock is light, which is sensed by retina and signals directly to the SCN. The central clock entrains the peripheral clocks through neuronal and hormonal signals, body temperature and feeding-related cues, aligning all clocks with the external light/dark cycle. Circadian rhythms allow an organism to achieve temporal homeostasis with its environment at the molecular level by regulating gene expression to create a peak of protein expression once every 24 hours to control when a particular physiological process is most active with respect to the solar day. Transcription and translation of core clock components (CLOCK, NPAS2, BMAL1, BMAL2, PER1, PER2, PER3, CRY1 and CRY2) plays a critical role in rhythm generation, whereas delays imposed by post-translational modifications (PTMs) are important for determining the period (tau) of the rhythms (tau refers to the period of a rhythm and is the length, in time, of one complete cycle). A diurnal rhythm is synchronized with the day/night cycle, while the ultradian and infradian rhythms have a period shorter and longer than 24 hours, respectively. Disruptions in the circadian rhythms contribute to the pathology of cardiovascular diseases, cancer, metabolic syndromes and aging. A transcription/translation feedback loop (TTFL) forms the core of the molecular circadian clock mechanism. Transcription factors, CLOCK or NPAS2 and BMAL1 or BMAL2, form the positive limb of the feedback loop, act in the form of a heterodimer and activate the transcription of core clock genes and clock-controlled genes (involved in key metabolic processes), harboring E-box elements (5'-CACGTG-3') within their promoters. The core clock genes: PER1/2/3 and CRY1/2 which are transcriptional repressors form the negative limb of the feedback loop and interact with the CLOCK|NPAS2-BMAL1|BMAL2 heterodimer inhibiting its activity and thereby negatively regulating their own expression. This heterodimer also activates nuclear receptors NR1D1/2 and RORA/B/G, which form a second feedback loop and which activate and repress BMAL1 transcription, respectively. The CLOCK-BMAL2 heterodimer activates the transcription of SERPINE1/PAI1 and BHLHE40/DEC1. The chain is Basic helix-loop-helix ARNT-like protein 2 from Homo sapiens (Human).